The primary structure comprises 580 residues: G1/S-specific cyclin CLN3 (580 aa).

Residues 454-469 (FTPTSSSSSPSPFNSP) are compositionally biased toward low complexity. 2 disordered regions span residues 454-498 (FTPT…QNSF) and 546-580 (MATAHPCSAPTQLKKRSTSSVDCDFNDSSNLKKTR). 2 stretches are compositionally biased toward polar residues: residues 470 to 480 (YKTSSSMTTPD) and 563 to 580 (TSSVDCDFNDSSNLKKTR).

It belongs to the cyclin family.

In terms of biological role, essential for the control of the cell cycle at the G1/S (start) transition. CLN3 may be an upstream activator of the G1 cyclins which directly catalyze start. The sequence is that of G1/S-specific cyclin CLN3 (CLN3) from Saccharomyces cerevisiae (strain ATCC 204508 / S288c) (Baker's yeast).